The chain runs to 334 residues: Transcription initiation factor IIB (334 aa).

The segment at 34-65 (EELVCPMCDSKNIIKDYEKAEIVCEDCGCVLQ) adopts a TFIIB-type zinc-finger fold. Residues cysteine 38, cysteine 41, cysteine 57, and cysteine 60 each coordinate Zn(2+). 2 consecutive repeat copies span residues 151-234 (SELD…SREL) and 245-326 (DYVP…ELTE).

The protein belongs to the TFIIB family.

Stabilizes TBP binding to an archaeal box-A promoter. Also responsible for recruiting RNA polymerase II to the pre-initiation complex (DNA-TBP-TFIIB). This Methanococcus aeolicus (strain ATCC BAA-1280 / DSM 17508 / OCM 812 / Nankai-3) protein is Transcription initiation factor IIB.